The primary structure comprises 793 residues: E3 ubiquitin-protein ligase UHRF1 (793 aa).

Residues 1-78 (MWIQVRTMDG…IQLLVRQSLV (78 aa)) form the Ubiquitin-like domain. A phosphoserine mark is found at S76, S91, S95, and S165. The interval 82 to 124 (STKERDSELSDTDSGCCLGQSESDKSSTHGEAAAETDSRPADE) is disordered. Tudor-like regions lie at residues 133 to 209 (GLYK…ARAR) and 216 to 283 (DLEV…IERP). K279 participates in a covalent cross-link: Glycyl lysine isopeptide (Lys-Gly) (interchain with G-Cter in SUMO2). Phosphoserine is present on S287. A linker region spans residues 296–301 (RKSGPS). S298 carries the phosphoserine; by PKA modification. The segment at 310 to 366 (NRLCRVCACHLCGGRQDPDKQLMCDECDMAFHIYCLDPPLSSVPSEDEWYCPECRND) adopts a PHD-type zinc-finger fold. 2 histone H3R2me0 binding regions span residues 333-337 (CDECD) and 353-355 (PSE). The residue at position 368 (S368) is a Phosphoserine. K385 is covalently cross-linked (Glycyl lysine isopeptide (Lys-Gly) (interchain with G-Cter in SUMO2)). Position 399 is an N6-acetyllysine (K399). In terms of domain architecture, YDG spans 419 to 582 (GPIPGIPVGT…FLVWRYLLRR (164 aa)). Residues 445 to 446 (HV) are required to promote base flipping. DNA contacts are provided by residues 463-464 (AG) and D469. 2 required for formation of a 5-methylcytosine-binding pocket regions span residues 466-469 (YEDD) and 478-481 (YTGS). N6-acetyllysine; alternate is present on K546. A Glycyl lysine isopeptide (Lys-Gly) (interchain with G-Cter in SUMO2); alternate cross-link involves residue K546. Positions 618–629 (REREKENSKREE) are enriched in basic and acidic residues. A disordered region spans residues 618–673 (REREKENSKREEEEQQEGGFASPRTGKGKWKRKSAGGGPSRAGSPRRTSKKTKVEP). Residue S639 is modified to Phosphoserine; by CDK1. S651 is modified (phosphoserine). Residue K670 forms a Glycyl lysine isopeptide (Lys-Gly) (interchain with G-Cter in SUMO2) linkage. Residues S707 and S709 each carry the phosphoserine modification. The RING-type zinc finger occupies 724 to 763 (CICCQELVFRPITTVCQHNVCKDCLDRSFRAQVFSCPACR).

Interacts with DNMT3A and DNMT3B. Interacts with DNMT1; the interaction is direct. Interacts with USP7; leading to its deubiquitination. Interacts with histone H3. Interacts with HDAC1, but not with HDAC2. Interacts with BLTP3A. Interacts with PML. Interacts with EHMT2. Binds hemimethylated CpG containing oligonucleotides. Interacts with ZNF263; recruited to the SIX3 promoter along with other proteins involved in chromatin modification and transcriptional corepression where it contributes to transcriptional repression. Interacts with UHRF2. Interacts with FANCD2. Interacts with TET1 isoform 2; this interaction induces the recruitment of TET1 isoform 2 to replicating heterochromatin. Phosphorylation at Ser-298 of the linker region decreases the binding to H3K9me3. Phosphorylation at Ser-639 by CDK1 during M phase impairs interaction with USP7, preventing deubiquitination and leading to degradation by the proteasome. In terms of processing, ubiquitinated; which leads to proteasomal degradation. Autoubiquitinated; interaction with USP7 leads to deubiquitination and prevents degradation. Ubiquitination and degradation takes place during M phase, when phosphorylation at Ser-639 prevents interaction with USP7 and subsequent deubiquitination. Polyubiquitination may be stimulated by DNA damage. Expressed in thymus, bone marrow, testis, lung and heart. Overexpressed in breast cancer.

The protein localises to the nucleus. It carries out the reaction S-ubiquitinyl-[E2 ubiquitin-conjugating enzyme]-L-cysteine + [acceptor protein]-L-lysine = [E2 ubiquitin-conjugating enzyme]-L-cysteine + N(6)-ubiquitinyl-[acceptor protein]-L-lysine.. Its pathway is protein modification; protein ubiquitination. Its function is as follows. Multidomain protein that acts as a key epigenetic regulator by bridging DNA methylation and chromatin modification. Specifically recognizes and binds hemimethylated DNA at replication forks via its YDG domain and recruits DNMT1 methyltransferase to ensure faithful propagation of the DNA methylation patterns through DNA replication. In addition to its role in maintenance of DNA methylation, also plays a key role in chromatin modification: through its tudor-like regions and PHD-type zinc fingers, specifically recognizes and binds histone H3 trimethylated at 'Lys-9' (H3K9me3) and unmethylated at 'Arg-2' (H3R2me0), respectively, and recruits chromatin proteins. Enriched in pericentric heterochromatin where it recruits different chromatin modifiers required for this chromatin replication. Also localizes to euchromatic regions where it negatively regulates transcription possibly by impacting DNA methylation and histone modifications. Has E3 ubiquitin-protein ligase activity by mediating the ubiquitination of target proteins such as histone H3 and PML. It is still unclear how E3 ubiquitin-protein ligase activity is related to its role in chromatin in vivo. Plays a role in DNA repair by cooperating with UHRF2 to ensure recruitment of FANCD2 to interstrand cross-links (ICLs) leading to FANCD2 activation. Acts as a critical player of proper spindle architecture by catalyzing the 'Lys-63'-linked ubiquitination of KIF11, thereby controlling KIF11 localization on the spindle. This is E3 ubiquitin-protein ligase UHRF1 (UHRF1) from Homo sapiens (Human).